The chain runs to 500 residues: Maturase K (500 aa).

It belongs to the intron maturase 2 family. MatK subfamily.

It is found in the plastid. Its subcellular location is the chloroplast. In terms of biological role, usually encoded in the trnK tRNA gene intron. Probably assists in splicing its own and other chloroplast group II introns. The sequence is that of Maturase K from Fragaria vesca (Woodland strawberry).